Here is a 140-residue protein sequence, read N- to C-terminus: 3-hydroxyacyl-[acyl-carrier-protein] dehydratase FabZ (140 aa).

H47 is a catalytic residue.

It belongs to the thioester dehydratase family. FabZ subfamily.

The protein localises to the cytoplasm. It catalyses the reaction a (3R)-hydroxyacyl-[ACP] = a (2E)-enoyl-[ACP] + H2O. In terms of biological role, involved in unsaturated fatty acids biosynthesis. Catalyzes the dehydration of short chain beta-hydroxyacyl-ACPs and long chain saturated and unsaturated beta-hydroxyacyl-ACPs. This chain is 3-hydroxyacyl-[acyl-carrier-protein] dehydratase FabZ, found in Streptococcus pneumoniae serotype 4 (strain ATCC BAA-334 / TIGR4).